Consider the following 119-residue polypeptide: Beta-2-microglobulin (119 aa).

A signal peptide spans 1 to 20; that stretch reads MARFVAVALLVLLSLSGLET. Positions 25-114 constitute an Ig-like C1-type domain; the sequence is PKIQVYSRHP…VTFSTPKTVK (90 aa). Cysteine 45 and cysteine 100 are disulfide-bonded.

This sequence belongs to the beta-2-microglobulin family. As to quaternary structure, heterodimer of an alpha chain and a beta chain. Beta-2-microglobulin is the beta-chain of major histocompatibility complex class I molecules.

It is found in the secreted. In terms of biological role, component of the class I major histocompatibility complex (MHC). Involved in the presentation of peptide antigens to the immune system. The chain is Beta-2-microglobulin (B2M) from Callicebus personatus personatus (Masked titi).